The sequence spans 72 residues: MAKEDSIEMQGTVLDTLPNTMFRVELENGHVVTAHISGKMRKHYIRILTGDTVTVQLTPYDLTKGRIVFRAR.

Positions 1 to 72 constitute an S1-like domain; the sequence is MAKEDSIEMQ…TKGRIVFRAR (72 aa).

It belongs to the IF-1 family. In terms of assembly, component of the 30S ribosomal translation pre-initiation complex which assembles on the 30S ribosome in the order IF-2 and IF-3, IF-1 and N-formylmethionyl-tRNA(fMet); mRNA recruitment can occur at any time during PIC assembly.

It is found in the cytoplasm. One of the essential components for the initiation of protein synthesis. Stabilizes the binding of IF-2 and IF-3 on the 30S subunit to which N-formylmethionyl-tRNA(fMet) subsequently binds. Helps modulate mRNA selection, yielding the 30S pre-initiation complex (PIC). Upon addition of the 50S ribosomal subunit IF-1, IF-2 and IF-3 are released leaving the mature 70S translation initiation complex. This is Translation initiation factor IF-1 from Idiomarina loihiensis (strain ATCC BAA-735 / DSM 15497 / L2-TR).